Here is a 362-residue protein sequence, read N- to C-terminus: Protein MGF 360-2L (362 aa).

This sequence belongs to the asfivirus MGF 360 family.

Plays a role in virus cell tropism, and may be required for efficient virus replication in macrophages. The protein is Protein MGF 360-2L of African swine fever virus (strain Badajoz 1971 Vero-adapted) (Ba71V).